The chain runs to 247 residues: uncharacterized protein (247 aa).

This is an uncharacterized protein from Acanthamoeba polyphaga (Amoeba).